The sequence spans 555 residues: Phosphomethylpyrimidine synthase (555 aa).

Residues asparagine 191, methionine 220, tyrosine 249, histidine 285, serine 305–glycine 307, aspartate 346–arginine 349, and glutamate 385 each bind substrate. Position 389 (histidine 389) interacts with Zn(2+). Tyrosine 412 is a binding site for substrate. Histidine 453 provides a ligand contact to Zn(2+). Positions 533, 536, and 541 each coordinate [4Fe-4S] cluster.

It belongs to the ThiC family. As to quaternary structure, homodimer. Requires [4Fe-4S] cluster as cofactor.

The enzyme catalyses 5-amino-1-(5-phospho-beta-D-ribosyl)imidazole + S-adenosyl-L-methionine = 4-amino-2-methyl-5-(phosphooxymethyl)pyrimidine + CO + 5'-deoxyadenosine + formate + L-methionine + 3 H(+). The protein operates within cofactor biosynthesis; thiamine diphosphate biosynthesis. Functionally, catalyzes the synthesis of the hydroxymethylpyrimidine phosphate (HMP-P) moiety of thiamine from aminoimidazole ribotide (AIR) in a radical S-adenosyl-L-methionine (SAM)-dependent reaction. This Ehrlichia ruminantium (strain Welgevonden) protein is Phosphomethylpyrimidine synthase.